A 195-amino-acid chain; its full sequence is Imidazoleglycerol-phosphate dehydratase (195 aa).

The protein belongs to the imidazoleglycerol-phosphate dehydratase family.

It localises to the cytoplasm. The catalysed reaction is D-erythro-1-(imidazol-4-yl)glycerol 3-phosphate = 3-(imidazol-4-yl)-2-oxopropyl phosphate + H2O. It functions in the pathway amino-acid biosynthesis; L-histidine biosynthesis; L-histidine from 5-phospho-alpha-D-ribose 1-diphosphate: step 6/9. This chain is Imidazoleglycerol-phosphate dehydratase, found in Aromatoleum aromaticum (strain DSM 19018 / LMG 30748 / EbN1) (Azoarcus sp. (strain EbN1)).